Reading from the N-terminus, the 301-residue chain is Acetylglutamate kinase (301 aa).

Substrate contacts are provided by residues 72-73, arginine 94, and asparagine 199; that span reads GG.

Belongs to the acetylglutamate kinase family. ArgB subfamily.

The protein resides in the cytoplasm. It catalyses the reaction N-acetyl-L-glutamate + ATP = N-acetyl-L-glutamyl 5-phosphate + ADP. It functions in the pathway amino-acid biosynthesis; L-arginine biosynthesis; N(2)-acetyl-L-ornithine from L-glutamate: step 2/4. In terms of biological role, catalyzes the ATP-dependent phosphorylation of N-acetyl-L-glutamate. This is Acetylglutamate kinase from Azorhizobium caulinodans (strain ATCC 43989 / DSM 5975 / JCM 20966 / LMG 6465 / NBRC 14845 / NCIMB 13405 / ORS 571).